Reading from the N-terminus, the 264-residue chain is Spermidine/putrescine transport system permease protein PotC (264 aa).

Topologically, residues M1 to R7 are cytoplasmic. A helical membrane pass occupies residues G8–V27. Over N28 to T65 the chain is Periplasmic. The ABC transmembrane type-1 domain maps to A60–S248. Residues M66 to L85 form a helical membrane-spanning segment. Residues Y86–L100 are Cytoplasmic-facing. The helical transmembrane segment at F101 to M120 threads the bilayer. The Periplasmic segment spans residues L121–F128. Residues W129–Y148 traverse the membrane as a helical segment. At S149–I176 the chain is on the cytoplasmic side. A helical membrane pass occupies residues I177 to S196. At M197–N231 the chain is on the periplasmic side. The chain crosses the membrane as a helical span at residues A232–I251. The Cytoplasmic portion of the chain corresponds to A252 to K264.

It belongs to the binding-protein-dependent transport system permease family. CysTW subfamily.

It is found in the cell inner membrane. Functionally, required for the activity of the bacterial periplasmic transport system of putrescine and spermidine. In Escherichia coli O157:H7, this protein is Spermidine/putrescine transport system permease protein PotC (potC).